Here is a 657-residue protein sequence, read N- to C-terminus: Threonine--tRNA ligase (657 aa).

A TGS domain is found at 1–70; the sequence is MSDHKESTGA…NSDAAIEIIT (70 aa). The tract at residues 253-555 is catalytic; sequence DHRKLGAELE…LIEHTAGNFP (303 aa). Zn(2+) is bound by residues cysteine 351, histidine 402, and histidine 532.

This sequence belongs to the class-II aminoacyl-tRNA synthetase family. In terms of assembly, homodimer. The cofactor is Zn(2+).

It is found in the cytoplasm. The enzyme catalyses tRNA(Thr) + L-threonine + ATP = L-threonyl-tRNA(Thr) + AMP + diphosphate + H(+). Its function is as follows. Catalyzes the attachment of threonine to tRNA(Thr) in a two-step reaction: L-threonine is first activated by ATP to form Thr-AMP and then transferred to the acceptor end of tRNA(Thr). Also edits incorrectly charged L-seryl-tRNA(Thr). The polypeptide is Threonine--tRNA ligase (Chlorobium chlorochromatii (strain CaD3)).